Here is a 124-residue protein sequence, read N- to C-terminus: Small ribosomal subunit protein uS12 (124 aa).

The residue at position 89 (D89) is a 3-methylthioaspartic acid.

Belongs to the universal ribosomal protein uS12 family. Part of the 30S ribosomal subunit. Contacts proteins S8 and S17. May interact with IF1 in the 30S initiation complex.

With S4 and S5 plays an important role in translational accuracy. In terms of biological role, interacts with and stabilizes bases of the 16S rRNA that are involved in tRNA selection in the A site and with the mRNA backbone. Located at the interface of the 30S and 50S subunits, it traverses the body of the 30S subunit contacting proteins on the other side and probably holding the rRNA structure together. The combined cluster of proteins S8, S12 and S17 appears to hold together the shoulder and platform of the 30S subunit. This Psychrobacter sp. (strain PRwf-1) protein is Small ribosomal subunit protein uS12.